The following is a 1220-amino-acid chain: Myosin-2 (1220 aa).

The segment covering 1 to 12 (MMLSASPNTLAK) has biased composition (polar residues). Disordered regions lie at residues 1–54 (MMLS…ARRS) and 68–95 (QNGS…RKEK). Over residues 20–33 (ESLRQKDECDRPKD) the composition is skewed to basic and acidic residues. Positions 40–54 (SRPNSRARLPSARRS) are enriched in low complexity. A compositionally biased stretch (basic and acidic residues) spans 82-95 (ESERKEEGVKRKEK). A Myosin N-terminal SH3-like domain is found at 160–209 (KKKLRVWCRVSNGQWQLGKIQSTSADTSLVMLSTANVVKVSTEELFPANP). The 667-residue stretch at 213–879 (EGVEDLIQLS…QIGIFEDRRK (667 aa)) folds into the Myosin motor domain. Residues 304-311 (GESGAGKT) and 353-361 (NANSSRFGK) contribute to the ATP site. Actin-binding regions lie at residues 638–672 (LIEK…KQHL) and 759–781 (LFKL…KPNS). 3 consecutive IQ domains span residues 881–910 (VLQG…VTLV), 904–933 (MRKV…FHAD), and 942–971 (ELSA…QKEL). Disordered regions lie at residues 968-1007 (QKEL…MSDL) and 1075-1118 (SITG…NGNT). Composition is skewed to polar residues over residues 997 to 1006 (PQVQPTSMSD) and 1098 to 1118 (TMST…NGNT). Residues 1003 to 1071 (SMSDLQKRIL…MSLAAARKSL (69 aa)) adopt a coiled-coil conformation.

It belongs to the TRAFAC class myosin-kinesin ATPase superfamily. Myosin family. Plant myosin class VIII subfamily. As to quaternary structure, homodimer. As to expression, expressed in flowers, leaves and roots.

The protein resides in the cell junction. The protein localises to the plasmodesma. It localises to the endosome. Its function is as follows. Myosin heavy chain that is required for the cell cycle-regulated transport of various organelles and proteins for their segregation. Functions by binding with its tail domain to receptor proteins on organelles and exerting force with its N-terminal motor domain against actin filaments, thereby transporting its cargo along polarized actin cables. Involved in endocytosis via its action in endosomal trafficking. The protein is Myosin-2 (VIII-2) of Arabidopsis thaliana (Mouse-ear cress).